We begin with the raw amino-acid sequence, 251 residues long: Keratin-associated protein 10-10 (251 aa).

A run of 15 repeats spans residues Cys-26 to Cys-30, Cys-31 to Ala-35, Cys-52 to Ala-56, Cys-84 to Ser-88, Cys-94 to Val-98, Cys-99 to Val-103, Cys-104 to Cys-109, Cys-126 to Ser-130, Cys-136 to Ser-140, Cys-146 to Val-150, Cys-168 to Ser-172, Cys-178 to Ser-182, Cys-183 to Ser-187, Cys-202 to Val-206, and Cys-220 to Ala-224. The segment at Cys-26–Ala-224 is 15 X 5 AA repeats of C-C-X(3).

It belongs to the KRTAP type 10 family. Interacts with hair keratins. In terms of tissue distribution, restricted to a narrow region of the hair fiber cuticle, lying approximately 20 cell layers above the apex of the dermal papilla of the hair root; not detected in any other tissues.

Its function is as follows. In the hair cortex, hair keratin intermediate filaments are embedded in an interfilamentous matrix, consisting of hair keratin-associated proteins (KRTAP), which are essential for the formation of a rigid and resistant hair shaft through their extensive disulfide bond cross-linking with abundant cysteine residues of hair keratins. The matrix proteins include the high-sulfur and high-glycine-tyrosine keratins. The polypeptide is Keratin-associated protein 10-10 (KRTAP10-10) (Homo sapiens (Human)).